Consider the following 260-residue polypeptide: Methylphosphonate hydroxylase (260 aa).

Residue lysine 107 coordinates 2-oxoglutarate. Residues histidine 117, aspartate 119, and histidine 195 each contribute to the Fe cation site.

Belongs to the PhyH family. Fe(2+) serves as cofactor.

The enzyme catalyses methylphosphonate + 2-oxoglutarate + O2 = hydroxymethylphosphonate + succinate + CO2. Part of an oxidative pathway for utilization of methylphosphonic acid as a phosphate source. Catalyzes the conversion of methylphosphonic acid to hydroxymethylphosphonic acid. Is specific for the hydroxylation of methylphosphonate. The sequence is that of Methylphosphonate hydroxylase from Gimesia maris (strain ATCC 29201 / DSM 8797 / 534-30) (Planctomyces maris).